The primary structure comprises 205 residues: Adenylyl-sulfate kinase (205 aa).

31–38 (GLSGAGKS) provides a ligand contact to ATP. S105 functions as the Phosphoserine intermediate in the catalytic mechanism.

The protein belongs to the APS kinase family.

The catalysed reaction is adenosine 5'-phosphosulfate + ATP = 3'-phosphoadenylyl sulfate + ADP + H(+). It functions in the pathway sulfur metabolism; hydrogen sulfide biosynthesis; sulfite from sulfate: step 2/3. Functionally, catalyzes the synthesis of activated sulfate. The chain is Adenylyl-sulfate kinase from Shewanella sp. (strain ANA-3).